The sequence spans 488 residues: Ribosomal protein uS12 methylthiotransferase RimO (488 aa).

Positions Arg4 to Glu120 constitute an MTTase N-terminal domain. The [4Fe-4S] cluster site is built by Cys13, Cys49, Cys83, Cys155, Cys159, and Cys162. A Radical SAM core domain is found at Ser141–Lys377. The TRAM domain maps to Ala380 to Asp448.

This sequence belongs to the methylthiotransferase family. RimO subfamily. [4Fe-4S] cluster serves as cofactor.

It is found in the cytoplasm. It catalyses the reaction L-aspartate(89)-[ribosomal protein uS12]-hydrogen + (sulfur carrier)-SH + AH2 + 2 S-adenosyl-L-methionine = 3-methylsulfanyl-L-aspartate(89)-[ribosomal protein uS12]-hydrogen + (sulfur carrier)-H + 5'-deoxyadenosine + L-methionine + A + S-adenosyl-L-homocysteine + 2 H(+). In terms of biological role, catalyzes the methylthiolation of an aspartic acid residue of ribosomal protein uS12. The chain is Ribosomal protein uS12 methylthiotransferase RimO from Sorangium cellulosum (strain So ce56) (Polyangium cellulosum (strain So ce56)).